The chain runs to 231 residues: UPF0758 protein YsxA (231 aa).

Residues 109–231 (VIRSPEDGAN…FVSLKEKGYL (123 aa)) form the MPN domain. Zn(2+) is bound by residues His-180, His-182, and Asp-193. A JAMM motif motif is present at residues 180-193 (HNHPSGDPTPSRED).

Belongs to the UPF0758 family.

The chain is UPF0758 protein YsxA (ysxA) from Bacillus subtilis (strain 168).